A 155-amino-acid polypeptide reads, in one-letter code: Small ribosomal subunit protein uS7 (155 aa).

Belongs to the universal ribosomal protein uS7 family. In terms of assembly, part of the 30S ribosomal subunit. Contacts proteins S9 and S11.

In terms of biological role, one of the primary rRNA binding proteins, it binds directly to 16S rRNA where it nucleates assembly of the head domain of the 30S subunit. Is located at the subunit interface close to the decoding center, probably blocks exit of the E-site tRNA. The sequence is that of Small ribosomal subunit protein uS7 from Kosmotoga olearia (strain ATCC BAA-1733 / DSM 21960 / TBF 19.5.1).